Reading from the N-terminus, the 116-residue chain is Large ribosomal subunit protein bL19 (116 aa).

It belongs to the bacterial ribosomal protein bL19 family.

Its function is as follows. This protein is located at the 30S-50S ribosomal subunit interface and may play a role in the structure and function of the aminoacyl-tRNA binding site. The polypeptide is Large ribosomal subunit protein bL19 (Roseiflexus castenholzii (strain DSM 13941 / HLO8)).